A 708-amino-acid polypeptide reads, in one-letter code: Elongation factor G (708 aa).

In terms of domain architecture, tr-type G spans 9–289; the sequence is MFTRNIGIMA…AVCAFLPSPE (281 aa). GTP is bound by residues 18–25, 86–90, and 140–143; these read AHIDAGKT, DTPGH, and NKMD.

This sequence belongs to the TRAFAC class translation factor GTPase superfamily. Classic translation factor GTPase family. EF-G/EF-2 subfamily.

The protein resides in the cytoplasm. Functionally, catalyzes the GTP-dependent ribosomal translocation step during translation elongation. During this step, the ribosome changes from the pre-translocational (PRE) to the post-translocational (POST) state as the newly formed A-site-bound peptidyl-tRNA and P-site-bound deacylated tRNA move to the P and E sites, respectively. Catalyzes the coordinated movement of the two tRNA molecules, the mRNA and conformational changes in the ribosome. This Parabacteroides distasonis (strain ATCC 8503 / DSM 20701 / CIP 104284 / JCM 5825 / NCTC 11152) protein is Elongation factor G.